The following is a 315-amino-acid chain: Adenine deaminase (315 aa).

Zn(2+)-binding residues include histidine 14, histidine 16, and histidine 194. Residue glutamate 197 is the Proton donor of the active site. Aspartate 275 lines the Zn(2+) pocket. Substrate is bound at residue aspartate 276.

The protein belongs to the metallo-dependent hydrolases superfamily. Adenosine and AMP deaminases family. Adenine deaminase type 2 subfamily. The cofactor is Zn(2+).

The catalysed reaction is adenine + H2O + H(+) = hypoxanthine + NH4(+). Catalyzes the hydrolytic deamination of adenine to hypoxanthine. Plays an important role in the purine salvage pathway and in nitrogen catabolism. The protein is Adenine deaminase of Pseudomonas putida (strain GB-1).